The sequence spans 117 residues: uncharacterized protein (117 aa).

The disordered stretch occupies residues 16-56 (FSQSSDGRSNGGGSSSGDSVSTTSDGLLTTGTSPNTSSTSL). Over residues 31-56 (SGDSVSTTSDGLLTTGTSPNTSSTSL) the composition is skewed to low complexity.

This is an uncharacterized protein from Saccharomyces cerevisiae (strain ATCC 204508 / S288c) (Baker's yeast).